The chain runs to 236 residues: Peroxisomal membrane protein PMP27 (236 aa).

It belongs to the peroxin-11 family. In terms of assembly, homooligomer. Interacts with PEX34.

The protein localises to the peroxisome membrane. In terms of biological role, involved in peroxisomal proliferation. Promotes peroxisome division and biogenesis. This chain is Peroxisomal membrane protein PMP27 (PEX11), found in Saccharomyces cerevisiae (strain ATCC 204508 / S288c) (Baker's yeast).